The primary structure comprises 188 residues: dCTP deaminase (188 aa).

Residues 111-116, 135-137, glutamine 156, tyrosine 170, and glutamine 180 contribute to the dCTP site; these read KSTYAR and TLE. Glutamate 137 (proton donor/acceptor) is an active-site residue.

Belongs to the dCTP deaminase family. As to quaternary structure, homotrimer.

The catalysed reaction is dCTP + H2O + H(+) = dUTP + NH4(+). It functions in the pathway pyrimidine metabolism; dUMP biosynthesis; dUMP from dCTP (dUTP route): step 1/2. Its function is as follows. Catalyzes the deamination of dCTP to dUTP. This is dCTP deaminase from Herminiimonas arsenicoxydans.